The sequence spans 113 residues: Hydrogenase maturation factor HybF (113 aa).

Positions 2 and 3 each coordinate Ni(2+). Residues Cys-73, Cys-76, Cys-89, and Cys-92 each contribute to the Zn(2+) site.

The protein belongs to the HypA/HybF family. HybF subfamily. In terms of assembly, monomer.

Involved in the maturation of [NiFe] hydrogenases. Required for nickel insertion into the metal center of the hydrogenase. HybF is involved in maturation of hydrogenases 1 and 2. It may partially substitute for the function of HypA and vice versa. This chain is Hydrogenase maturation factor HybF, found in Escherichia coli (strain K12).